Consider the following 246-residue polypeptide: Complement C1q tumor necrosis factor-related protein 3 (246 aa).

Positions 1–22 (MLWRQLIYWQLLALFFLPFCLC) are cleaved as a signal peptide. Residues 51–113 (GYQGPPGPPG…KGEKGYPGIP (63 aa)) enclose the Collagen-like domain. Residues 53 to 110 (QGPPGPPGPPGIPGNHGNNGNNGATGHEGAKGEKGDKGDLGPRGERGQHGPKGEKGYP) are disordered. Pro residues predominate over residues 55–64 (PPGPPGPPGI). Low complexity predominate over residues 65–74 (PGNHGNNGNN). N-linked (GlcNAc...) asparagine glycosylation is present at asparagine 70. Basic and acidic residues predominate over residues 80–107 (EGAKGEKGDKGDLGPRGERGQHGPKGEK). One can recognise a C1q domain in the interval 113–246 (PPELQIAFMA…FAGFLLFETK (134 aa)).

Glycosylated on Asn-70. As to expression, expressed in colon and small intestine.

It is found in the secreted. The sequence is that of Complement C1q tumor necrosis factor-related protein 3 (C1QTNF3) from Homo sapiens (Human).